We begin with the raw amino-acid sequence, 243 residues long: 4-hydroxy-tetrahydrodipicolinate reductase (243 aa).

Residues glycine 9–methionine 14, glycine 78–serine 80, and alanine 104–phenylalanine 107 contribute to the NAD(+) site. Histidine 134 (proton donor/acceptor) is an active-site residue. Histidine 135 is a (S)-2,3,4,5-tetrahydrodipicolinate binding site. The active-site Proton donor is the lysine 138. A (S)-2,3,4,5-tetrahydrodipicolinate-binding site is contributed by glycine 144 to threonine 145.

It belongs to the DapB family.

It is found in the cytoplasm. It carries out the reaction (S)-2,3,4,5-tetrahydrodipicolinate + NAD(+) + H2O = (2S,4S)-4-hydroxy-2,3,4,5-tetrahydrodipicolinate + NADH + H(+). The catalysed reaction is (S)-2,3,4,5-tetrahydrodipicolinate + NADP(+) + H2O = (2S,4S)-4-hydroxy-2,3,4,5-tetrahydrodipicolinate + NADPH + H(+). It participates in amino-acid biosynthesis; L-lysine biosynthesis via DAP pathway; (S)-tetrahydrodipicolinate from L-aspartate: step 4/4. Its function is as follows. Catalyzes the conversion of 4-hydroxy-tetrahydrodipicolinate (HTPA) to tetrahydrodipicolinate. The chain is 4-hydroxy-tetrahydrodipicolinate reductase from Legionella pneumophila (strain Corby).